We begin with the raw amino-acid sequence, 172 residues long: Adenine phosphoribosyltransferase (172 aa).

The protein belongs to the purine/pyrimidine phosphoribosyltransferase family. As to quaternary structure, homodimer.

The protein resides in the cytoplasm. The catalysed reaction is AMP + diphosphate = 5-phospho-alpha-D-ribose 1-diphosphate + adenine. The protein operates within purine metabolism; AMP biosynthesis via salvage pathway; AMP from adenine: step 1/1. In terms of biological role, catalyzes a salvage reaction resulting in the formation of AMP, that is energically less costly than de novo synthesis. In Hydrogenovibrio crunogenus (strain DSM 25203 / XCL-2) (Thiomicrospira crunogena), this protein is Adenine phosphoribosyltransferase.